The following is a 31-amino-acid chain: Photosystem I reaction center subunit XII (31 aa).

Residues 7–26 (QVFLALIIALIPGILADRLG) form a helical membrane-spanning segment.

It belongs to the PsaM family.

The protein resides in the plastid. The protein localises to the chloroplast thylakoid membrane. The chain is Photosystem I reaction center subunit XII from Euglena deses.